The chain runs to 239 residues: Fatty acid metabolism regulator protein (239 aa).

The 69-residue stretch at 6–74 folds into the HTH gntR-type domain; sequence QSPAGFAEEY…HGKPTKVNNF (69 aa). The H-T-H motif DNA-binding region spans 34–53; that stretch reads ERELSELIGVTRTTLREVLQ.

Homodimer.

The protein localises to the cytoplasm. In terms of biological role, multifunctional regulator of fatty acid metabolism. Represses transcription of at least eight genes required for fatty acid transport and beta-oxidation including fadA, fadB, fadD, fadL and fadE. Activates transcription of at least three genes required for unsaturated fatty acid biosynthesis: fabA, fabB and iclR, the gene encoding the transcriptional regulator of the aceBAK operon encoding the glyoxylate shunt enzymes. Binding of FadR is specifically inhibited by long chain fatty acyl-CoA compounds. The chain is Fatty acid metabolism regulator protein from Salmonella typhi.